The primary structure comprises 277 residues: MAAPTRRTVLGLARCWRRFESPWSLGSRSLTLAAAPSNSASPWRLLGALCLQRPPLVSKQLTPMQEEMAALLQQMEIERSLYSDHELRALDEAEQLEKKKSDLYEEKDEKNILLVQDLEDMWEQKFLQFKPGARITDADVKNDRSSLHRKLDRNLILLVKDKLGDQDVWMLPQAEWQPGETLRQTAERTLATLSENNLEAKFLGNAPCGHYKFKFPQAVRAEGSLGAKIFFFKALLLTGDFSPAVEKGRHVWASKEELGDYLKPKYLAQVRRFLLDL.

The residue at position 228 (Lys-228) is an N6-acetyllysine.

Belongs to the mitochondrion-specific ribosomal protein mL46 family. As to quaternary structure, component of the mitochondrial ribosome large subunit (39S) which comprises a 16S rRNA and about 50 distinct proteins.

It localises to the mitochondrion. The protein is Large ribosomal subunit protein mL46 (MRPL46) of Bos taurus (Bovine).